A 168-amino-acid chain; its full sequence is Plastocyanin A, chloroplastic (168 aa).

The transit peptide at 1-69 (MATVTSAAVS…SAMIASNAMA (69 aa)) directs the protein to the chloroplast. The Plastocyanin-like domain occupies 70–168 (IDVLLGADDG…AGMVGKVTVN (99 aa)). Positions 106, 153, 156, and 161 each coordinate Cu cation.

It belongs to the plastocyanin family. Cu(2+) is required as a cofactor.

The protein resides in the plastid. It localises to the chloroplast thylakoid membrane. Its function is as follows. Participates in electron transfer between P700 and the cytochrome b6-f complex in photosystem I. This is Plastocyanin A, chloroplastic (PETE) from Populus nigra (Lombardy poplar).